The chain runs to 183 residues: MKQLLDFLPLVIFFAVYKFYDIYAATGVLIAATAIQLVITYLIYKHIEKMHLATFAMVTVFGSLTLFFHDDAFIKWKVSIVYALFAIGLIASQIMGKSALKSMLGKEMKVDDRIWAQVTWYWVGFFVLCSFANIYIAFNLPLETWVNFKVFGLTALTLINTVITVVYLYKNMQDDNSQPTDNQ.

5 helical membrane-spanning segments follow: residues 22–42 (IYAA…ITYL), 50–70 (MHLA…FFHD), 72–92 (AFIK…LIAS), 118–138 (VTWY…YIAF), and 148–168 (FKVF…VVYL).

The protein belongs to the YciB family.

The protein resides in the cell inner membrane. In terms of biological role, plays a role in cell envelope biogenesis, maintenance of cell envelope integrity and membrane homeostasis. The protein is Inner membrane-spanning protein YciB of Shewanella frigidimarina (strain NCIMB 400).